A 158-amino-acid polypeptide reads, in one-letter code: Urease accessory protein UreE (158 aa).

This sequence belongs to the UreE family.

The protein localises to the cytoplasm. Functionally, involved in urease metallocenter assembly. Binds nickel. Probably functions as a nickel donor during metallocenter assembly. This chain is Urease accessory protein UreE, found in Microcystis aeruginosa (strain NIES-843 / IAM M-2473).